The sequence spans 504 residues: Probable cytosol aminopeptidase (504 aa).

Residues Lys274 and Asp279 each coordinate Mn(2+). Residue Lys286 is part of the active site. Mn(2+)-binding residues include Asp297, Asp356, and Glu358. Residue Arg360 is part of the active site.

It belongs to the peptidase M17 family. Mn(2+) is required as a cofactor.

The protein localises to the cytoplasm. The catalysed reaction is Release of an N-terminal amino acid, Xaa-|-Yaa-, in which Xaa is preferably Leu, but may be other amino acids including Pro although not Arg or Lys, and Yaa may be Pro. Amino acid amides and methyl esters are also readily hydrolyzed, but rates on arylamides are exceedingly low.. The enzyme catalyses Release of an N-terminal amino acid, preferentially leucine, but not glutamic or aspartic acids.. Functionally, presumably involved in the processing and regular turnover of intracellular proteins. Catalyzes the removal of unsubstituted N-terminal amino acids from various peptides. This is Probable cytosol aminopeptidase from Blochmanniella floridana.